Consider the following 163-residue polypeptide: Epididymal-specific lipocalin-6 (163 aa).

Positions Met-1–Ala-20 are cleaved as a signal peptide.

It belongs to the calycin superfamily. Lipocalin family. Predominantly expressed in epididymis.

The protein localises to the secreted. Its function is as follows. May play a role in male fertility. This chain is Epididymal-specific lipocalin-6 (LCN6), found in Homo sapiens (Human).